We begin with the raw amino-acid sequence, 460 residues long: ATP synthase subunit beta (460 aa).

ATP is bound at residue 150–157; sequence GGAGVGKT.

This sequence belongs to the ATPase alpha/beta chains family. F-type ATPases have 2 components, CF(1) - the catalytic core - and CF(0) - the membrane proton channel. CF(1) has five subunits: alpha(3), beta(3), gamma(1), delta(1), epsilon(1). CF(0) has three main subunits: a(1), b(2) and c(9-12). The alpha and beta chains form an alternating ring which encloses part of the gamma chain. CF(1) is attached to CF(0) by a central stalk formed by the gamma and epsilon chains, while a peripheral stalk is formed by the delta and b chains.

The protein resides in the cell inner membrane. The enzyme catalyses ATP + H2O + 4 H(+)(in) = ADP + phosphate + 5 H(+)(out). Its function is as follows. Produces ATP from ADP in the presence of a proton gradient across the membrane. The catalytic sites are hosted primarily by the beta subunits. The polypeptide is ATP synthase subunit beta (Citrobacter koseri (strain ATCC BAA-895 / CDC 4225-83 / SGSC4696)).